The primary structure comprises 89 residues: MGFKNNLSLVSVMVFALILLPMISGQTMQCYSGIACTDDGTCNDYCNPRNNNLGGVCLRRANCCCCYVSVVKSQESSLSKDTNNVFITN.

Positions 1 to 25 (MGFKNNLSLVSVMVFALILLPMISG) are cleaved as a signal peptide. 4 disulfide bridges follow: Cys-30–Cys-66, Cys-36–Cys-57, Cys-42–Cys-64, and Cys-46–Cys-65.

The protein belongs to the DEFL family.

It localises to the secreted. This Arabidopsis thaliana (Mouse-ear cress) protein is Putative defensin-like protein 89.